A 62-amino-acid polypeptide reads, in one-letter code: Large ribosomal subunit protein uL29 (62 aa).

It belongs to the universal ribosomal protein uL29 family.

This chain is Large ribosomal subunit protein uL29, found in Oleidesulfovibrio alaskensis (strain ATCC BAA-1058 / DSM 17464 / G20) (Desulfovibrio alaskensis).